The chain runs to 237 residues: BTB/POZ domain-containing protein KCTD6 (237 aa).

The tract at residues 1 to 104 (MDNGDWGYMM…FYQIEPLIQC (104 aa)) is interaction with ANK1 isoform Mu7. An interaction with CUL3 region spans residues 10–110 (MSDPVTLNVG…LIQCLNDPRP (101 aa)). One can recognise a BTB domain in the interval 12–81 (DPVTLNVGGH…LRTSELTLPL (70 aa)). Residues 113–187 (PMDTFEEVVE…TFGPCDYHQE (75 aa)) form an interaction with USP21 region.

As to quaternary structure, homopentamer. Interacts with KCTD11; KCTD6 and KCTD11 may associate in heteropentameric assemblies. Interacts (via BTB domain) with CUL3; initially a 4:4 stoichiometry has been reported, however, electron microscopy revealed pentameric states with a five-pointed pinwheel shape. The interaction with CUL3 is indicative for a participation in a BCR (BTB-CUL3-RBX1) E3 ubiquitin-protein ligase complex. Interacts with HDAC1; probably indirect as the interaction requires the presence of KCTD11. Interacts with USP21 (preferentially catalytic inactive form). Interacts with ANK1 isoform Mu7; detected in striated muscle. Interacts with USP11. As to expression, highly expressed in cerebellum and brain.

Its subcellular location is the cytoplasm. It localises to the myofibril. The protein localises to the sarcomere. The protein resides in the m line. Its pathway is protein modification; protein ubiquitination. In terms of biological role, probable substrate-specific adapter of a BCR (BTB-CUL3-RBX1) E3 ubiquitin-protein ligase complex mediating the ubiquitination and subsequent proteasomal degradation of target proteins. Promotes the ubiquitination of HDAC1; the function seems to depend on KCTD11:KCTD6 oligomerization. Can function as antagonist of the Hedgehog pathway by affecting the nuclear transfer of transcription factor GLI1; the function probably occurs via HDAC1 down-regulation, keeping GLI1 acetylated and inactive. Inhibits cell growth and tumorigenicity of medulloblastoma (MDB). Involved in regulating protein levels of ANK1 isoform Mu7 probably implicating CUL3-dependent proteasomal degradation. This Mus musculus (Mouse) protein is BTB/POZ domain-containing protein KCTD6 (Kctd6).